Here is a 44-residue protein sequence, read N- to C-terminus: Non-structural protein 7b (44 aa).

The chain crosses the membrane as a helical span at residues 9–29 (FYLCFLAFLLFLVLIMLIIFW).

The protein localises to the host membrane. The sequence is that of Non-structural protein 7b from Bat coronavirus Rp3/2004 (BtCoV/Rp3/2004).